The primary structure comprises 290 residues: tRNA dimethylallyltransferase (290 aa).

11 to 18 (GPTASGKS) lines the ATP pocket. 13 to 18 (TASGKS) is a substrate binding site. Interaction with substrate tRNA regions lie at residues 36-39 (DSMQ) and 158-162 (QRIVR).

This sequence belongs to the IPP transferase family. As to quaternary structure, monomer. Mg(2+) is required as a cofactor.

It carries out the reaction adenosine(37) in tRNA + dimethylallyl diphosphate = N(6)-dimethylallyladenosine(37) in tRNA + diphosphate. Functionally, catalyzes the transfer of a dimethylallyl group onto the adenine at position 37 in tRNAs that read codons beginning with uridine, leading to the formation of N6-(dimethylallyl)adenosine (i(6)A). This Bartonella tribocorum (strain CIP 105476 / IBS 506) protein is tRNA dimethylallyltransferase.